Reading from the N-terminus, the 107-residue chain is Thiosulfate sulfurtransferase GlpE (107 aa).

Residues 19-107 (QDLNAVLVDI…WHKAGLPVEK (89 aa)) form the Rhodanese domain. The Cysteine persulfide intermediate role is filled by C67.

It belongs to the GlpE family.

The protein resides in the cytoplasm. The catalysed reaction is thiosulfate + hydrogen cyanide = thiocyanate + sulfite + 2 H(+). It carries out the reaction thiosulfate + [thioredoxin]-dithiol = [thioredoxin]-disulfide + hydrogen sulfide + sulfite + 2 H(+). In terms of biological role, transferase that catalyzes the transfer of sulfur from thiosulfate to thiophilic acceptors such as cyanide or dithiols. May function in a CysM-independent thiosulfate assimilation pathway by catalyzing the conversion of thiosulfate to sulfite, which can then be used for L-cysteine biosynthesis. In Aliivibrio fischeri (strain ATCC 700601 / ES114) (Vibrio fischeri), this protein is Thiosulfate sulfurtransferase GlpE.